The primary structure comprises 150 residues: Large ribosomal subunit protein bL9 (150 aa).

It belongs to the bacterial ribosomal protein bL9 family.

Binds to the 23S rRNA. This Streptococcus agalactiae serotype III (strain NEM316) protein is Large ribosomal subunit protein bL9.